Here is a 686-residue protein sequence, read N- to C-terminus: Acyl-CoA synthetase short-chain family member 3, mitochondrial (686 aa).

The N-terminal 29 residues, 1–29 (MKPSWLQCRKVTSAGGLGGPLPGSSPARG), are a transit peptide targeting the mitochondrion. CoA is bound at residue 227–230 (EPGR). ATP contacts are provided by residues 425–427 (GER) and 446–451 (DHWWQT). Lysine 518 is subject to N6-succinyllysine. Lysine 524 bears the N6-acetyllysine mark. Aspartate 539, arginine 554, and arginine 565 together coordinate ATP. Arginine 624 lines the CoA pocket.

Belongs to the ATP-dependent AMP-binding enzyme family.

The protein resides in the mitochondrion matrix. It catalyses the reaction acetate + ATP + CoA = acetyl-CoA + AMP + diphosphate. It carries out the reaction propanoate + ATP + CoA = propanoyl-CoA + AMP + diphosphate. The enzyme catalyses butanoate + ATP + CoA = butanoyl-CoA + AMP + diphosphate. Catalyzes the synthesis of acetyl-CoA from short-chain fatty acids. Propionate is the preferred substrate. Can utilize acetate and butyrate with a much lower affinity. This is Acyl-CoA synthetase short-chain family member 3, mitochondrial (ACSS3) from Homo sapiens (Human).